Reading from the N-terminus, the 258-residue chain is UDP-N-acetylenolpyruvoylglucosamine reductase (258 aa).

Arg142 is a catalytic residue. Ser184 serves as the catalytic Proton donor. Glu254 is an active-site residue.

This sequence belongs to the MurB family. FAD is required as a cofactor.

It localises to the cytoplasm. The catalysed reaction is UDP-N-acetyl-alpha-D-muramate + NADP(+) = UDP-N-acetyl-3-O-(1-carboxyvinyl)-alpha-D-glucosamine + NADPH + H(+). Its pathway is cell wall biogenesis; peptidoglycan biosynthesis. In terms of biological role, cell wall formation. The sequence is that of UDP-N-acetylenolpyruvoylglucosamine reductase from Campylobacter jejuni subsp. jejuni serotype O:2 (strain ATCC 700819 / NCTC 11168).